The primary structure comprises 252 residues: Phosphosulfolactate synthase (252 aa).

It belongs to the phosphosulfolactate synthase family.

The enzyme catalyses (2R)-O-phospho-3-sulfolactate = phosphoenolpyruvate + sulfite + H(+). Its function is as follows. Catalyzes the addition of sulfite to phosphoenolpyruvate (PEP) to yield (2R)-phospho-3-sulfolactate (PSL). Is probably involved in the biosynthesis of L-sulfolactate, which is a major constituent of sporulating cells and mature spores. The sequence is that of Phosphosulfolactate synthase (yitD) from Bacillus subtilis (strain 168).